Here is a 700-residue protein sequence, read N- to C-terminus: Elongation factor G 2 (700 aa).

The region spanning 8–290 is the tr-type G domain; the sequence is ERYRNIGISA…AVIDFLPSPV (283 aa). GTP contacts are provided by residues 17-24, 88-92, and 142-145; these read AHIDAGKT, DTPGH, and NKMD.

It belongs to the TRAFAC class translation factor GTPase superfamily. Classic translation factor GTPase family. EF-G/EF-2 subfamily.

Its subcellular location is the cytoplasm. Functionally, catalyzes the GTP-dependent ribosomal translocation step during translation elongation. During this step, the ribosome changes from the pre-translocational (PRE) to the post-translocational (POST) state as the newly formed A-site-bound peptidyl-tRNA and P-site-bound deacylated tRNA move to the P and E sites, respectively. Catalyzes the coordinated movement of the two tRNA molecules, the mRNA and conformational changes in the ribosome. The protein is Elongation factor G 2 of Burkholderia mallei (strain ATCC 23344).